The primary structure comprises 398 residues: ATP-dependent RNA helicase eIF4A (398 aa).

Residues 25–53 (DSFDTMNLKPELLRGVYAYGFERPSAIQQ) carry the Q motif motif. The Helicase ATP-binding domain maps to 56–226 (IMPVIKGHDV…TKFMRDPVRI (171 aa)). 69–76 (AQSGTGKT) serves as a coordination point for ATP. The DEAD box signature appears at 174–177 (DEAD). In terms of domain architecture, Helicase C-terminal spans 237-398 (GIKQFYIAVE…EMPMNVADLI (162 aa)).

The protein belongs to the DEAD box helicase family. eIF4A subfamily. As to quaternary structure, component of the eIF4F complex, which composition varies with external and internal environmental conditions. It is composed of at least eIF4A, eIF4E and eIF4G.

The protein localises to the cytoplasm. The catalysed reaction is ATP + H2O = ADP + phosphate + H(+). ATP-dependent RNA helicase which is a subunit of the eIF4F complex involved in cap recognition and is required for mRNA binding to ribosome. In the current model of translation initiation, eIF4A unwinds RNA secondary structures in the 5'-UTR of mRNAs which is necessary to allow efficient binding of the small ribosomal subunit, and subsequent scanning for the initiator codon. The sequence is that of ATP-dependent RNA helicase eIF4A (tif1) from Sclerotinia sclerotiorum (strain ATCC 18683 / 1980 / Ss-1) (White mold).